A 64-amino-acid polypeptide reads, in one-letter code: Probable cytochrome c oxidase subunit 5C-3 (64 aa).

The helical transmembrane segment at 15 to 34 (SVVKELVIGLTLGLAAGGLW) threads the bilayer.

This sequence belongs to the cytochrome c oxidase subunit 5C family.

Its subcellular location is the mitochondrion inner membrane. This protein is one of the nuclear-coded polypeptide chains of cytochrome c oxidase, the terminal oxidase in mitochondrial electron transport. This Arabidopsis thaliana (Mouse-ear cress) protein is Probable cytochrome c oxidase subunit 5C-3.